Reading from the N-terminus, the 135-residue chain is Flagellar assembly factor FliW 1 (135 aa).

It belongs to the FliW family. In terms of assembly, interacts with translational regulator CsrA and flagellin(s).

Its subcellular location is the cytoplasm. In terms of biological role, acts as an anti-CsrA protein, binds CsrA and prevents it from repressing translation of its target genes, one of which is flagellin. Binds to flagellin and participates in the assembly of the flagellum. The protein is Flagellar assembly factor FliW 1 of Helicobacter pylori (strain HPAG1).